The following is a 457-amino-acid chain: Cell division protein FtsZ (457 aa).

Residues 26 to 30 (GGGGN), 115 to 117 (GTG), Glu-146, Lys-150, and Asp-193 contribute to the GTP site. A compositionally biased stretch (basic and acidic residues) spans 429-447 (KKDVVRSEESERPAFESER). The tract at residues 429 to 457 (KKDVVRSEESERPAFESERSSSPTTISFN) is disordered. Polar residues predominate over residues 448–457 (SSSPTTISFN).

Belongs to the FtsZ family. In terms of assembly, homodimer. Polymerizes to form a dynamic ring structure in a strictly GTP-dependent manner. Interacts directly with several other division proteins.

It localises to the cytoplasm. In terms of biological role, essential cell division protein that forms a contractile ring structure (Z ring) at the future cell division site. The regulation of the ring assembly controls the timing and the location of cell division. One of the functions of the FtsZ ring is to recruit other cell division proteins to the septum to produce a new cell wall between the dividing cells. Binds GTP and shows GTPase activity. The chain is Cell division protein FtsZ from Porphyromonas gingivalis (strain ATCC BAA-308 / W83).